The chain runs to 113 residues: Large ribosomal subunit protein bL17 (113 aa).

Belongs to the bacterial ribosomal protein bL17 family. As to quaternary structure, part of the 50S ribosomal subunit. Contacts protein L32.

This chain is Large ribosomal subunit protein bL17, found in Syntrophomonas wolfei subsp. wolfei (strain DSM 2245B / Goettingen).